The following is a 305-amino-acid chain: Protoheme IX farnesyltransferase (305 aa).

A run of 9 helical transmembrane segments spans residues 29–49, 51–71, 101–121, 123–143, 151–171, 177–197, 221–241, 244–264, and 283–303; these read VTQL…PGMV, WSVL…AFAI, TLIF…VFAN, LTMW…TILL, IVIG…AVSG, AWFL…ALAL, LLHI…PFVY, SGYI…GYAW, and ILYL…KFVP.

The protein belongs to the UbiA prenyltransferase family. Protoheme IX farnesyltransferase subfamily.

The protein localises to the cell inner membrane. It carries out the reaction heme b + (2E,6E)-farnesyl diphosphate + H2O = Fe(II)-heme o + diphosphate. It functions in the pathway porphyrin-containing compound metabolism; heme O biosynthesis; heme O from protoheme: step 1/1. In terms of biological role, converts heme B (protoheme IX) to heme O by substitution of the vinyl group on carbon 2 of heme B porphyrin ring with a hydroxyethyl farnesyl side group. The polypeptide is Protoheme IX farnesyltransferase (Cupriavidus metallidurans (strain ATCC 43123 / DSM 2839 / NBRC 102507 / CH34) (Ralstonia metallidurans)).